A 185-amino-acid polypeptide reads, in one-letter code: MPIMDLLNTRNKNMISLLIISFGRYQEVLETFACVNKYHGNKIELLFLDNNPERELEADLSSIVENNSGILFSYFHTGENLGVAEGRNFLIEKAQGDILITLDDDVEIEDITLLIQKVTDYMANNAKVGALAFNIKNYFTRKALSHEIPHGNKKLDFSQNLLTYYFIGAGHAIREKSLSKSGALP.

This is an uncharacterized protein from Haemophilus influenzae (strain ATCC 51907 / DSM 11121 / KW20 / Rd).